A 213-amino-acid polypeptide reads, in one-letter code: Adenylate kinase (213 aa).

ATP is bound at residue 14–19; sequence GSGKGT. The NMP stretch occupies residues 34 to 63; the sequence is STGDLLRAIIREGTPNGLKAKAYLDKGAFV. Residues Thr35, Arg40, 61-63, 89-92, and Gln96 contribute to the AMP site; these read AFV and GFPR. Residues 129 to 162 form an LID region; sequence SRFLCPSCSRIYNTSQGHTECPDCHVPLIRRSDD. Arg130 contributes to the ATP binding site. 2 residues coordinate Zn(2+): Cys133 and Cys136. 139 to 140 lines the ATP pocket; that stretch reads IY. Zn(2+) contacts are provided by Cys149 and Cys152. Arg159 and Arg170 together coordinate AMP. Asn198 serves as a coordination point for ATP.

This sequence belongs to the adenylate kinase family. As to quaternary structure, monomer.

The protein localises to the cytoplasm. It catalyses the reaction AMP + ATP = 2 ADP. Its pathway is purine metabolism; AMP biosynthesis via salvage pathway; AMP from ADP: step 1/1. Its function is as follows. Catalyzes the reversible transfer of the terminal phosphate group between ATP and AMP. Plays an important role in cellular energy homeostasis and in adenine nucleotide metabolism. The sequence is that of Adenylate kinase from Chlamydia pneumoniae (Chlamydophila pneumoniae).